Reading from the N-terminus, the 552-residue chain is Urocanate hydratase (552 aa).

NAD(+) is bound by residues 49–50, Gln-127, 173–175, Asp-193, 239–240, 260–264, 270–271, and Tyr-319; these read GG, GMG, NA, QTSAH, and YI. The active site involves Cys-407. Position 489 (Gly-489) interacts with NAD(+).

The protein belongs to the urocanase family. Requires NAD(+) as cofactor.

It localises to the cytoplasm. It catalyses the reaction 4-imidazolone-5-propanoate = trans-urocanate + H2O. It participates in amino-acid degradation; L-histidine degradation into L-glutamate; N-formimidoyl-L-glutamate from L-histidine: step 2/3. Catalyzes the conversion of urocanate to 4-imidazolone-5-propionate. The chain is Urocanate hydratase from Bacillus cereus (strain G9842).